A 48-amino-acid polypeptide reads, in one-letter code: MARFPEAEARLLNVKICMKCNARNAIRATSCRKCGSDELRAKSKERKA.

Belongs to the eukaryotic ribosomal protein eL40 family.

The chain is Large ribosomal subunit protein eL40 from Methanoculleus marisnigri (strain ATCC 35101 / DSM 1498 / JR1).